The primary structure comprises 676 residues: Electrogenic aspartate/glutamate antiporter SLC25A13, mitochondrial (676 aa).

At Ala2 the chain carries N-acetylalanine. Residues 2 to 295 (AAAKVALTKR…TLADIERIAP (294 aa)) are regulatory N-terminal domain. Residues 2–332 (AAAKVALTKR…LLQLAESAYR (331 aa)) are Mitochondrial intermembrane-facing. EF-hand domains are found at residues 51-86 (SQPN…SVLC), 87-122 (APDA…TTIH), 125-157 (IPFN…FLLE), and 158-193 (IQLE…IRPH). Asp66, Thr68, Asp70, Leu72, and Glu77 together coordinate Ca(2+). The segment at 296 to 312 (LEEGMLPFNLAEAQRQQ) is linker loop domain. Residues 322–613 (FLLQLAESAY…LQRWFYVDFG (292 aa)) are carrier domain. Solcar repeat units lie at residues 327–419 (AESA…VRDK), 427–511 (VPLL…VKAS), and 519–607 (VSPG…LQRW). A helical membrane pass occupies residues 333 to 350 (FGLGSIAGAVGATAVYPI). The Mitochondrial matrix segment spans residues 351–393 (DLVKTRMQNQRSTGSFVGELMYKNSFDCFKKVLRYEGFFGLYR). Residues Lys354 and Lys373 each carry the N6-acetyllysine modification. Residues 394–413 (GLLPQLLGVAPEKAIKLTVN) traverse the membrane as a helical segment. Topologically, residues 414–436 (DFVRDKFMHKDGSVPLLAEIFAG) are mitochondrial intermembrane. Residues 437–450 (GCAGGSQVIFTNPL) form a helical membrane-spanning segment. At 451–485 (EIVKIRLQVAGEITTGPRVSALSVVRDLGFFGIYK) the chain is on the mitochondrial matrix side. Lys454 carries the post-translational modification N6-methyllysine. N6-acetyllysine; alternate is present on Lys485. Position 485 is an N6-succinyllysine; alternate (Lys485). Residues 486–505 (GAKACFLRDIPFSAIYFPCY) traverse the membrane as a helical segment. The Mitochondrial intermembrane portion of the chain corresponds to 506–524 (AHVKASFANEDGQVSPGSL). A helical membrane pass occupies residues 525 to 542 (LLAGAIAGMPAASLVTPA). Topologically, residues 543 to 581 (DVIKTRLQVAARAGQTTYSGVTDCFRKILREEGPKALWK) are mitochondrial matrix. Residue Lys581 is modified to N6-succinyllysine. A helical transmembrane segment spans residues 582–601 (GAGARVFRSSPQFGVTLLTY). At 602–676 (ELLQRWFYVD…STSKVTAVGS (75 aa)) the chain is on the mitochondrial intermembrane side. The tract at residues 614–676 (GVKPVGSELV…STSKVTAVGS (63 aa)) is C-terminal domain. Lys663 bears the N6-acetyllysine mark. Position 667 is a phosphoserine (Ser667).

It belongs to the mitochondrial carrier (TC 2.A.29) family. As to quaternary structure, homodimer (via N-terminus).

The protein resides in the mitochondrion inner membrane. The catalysed reaction is L-aspartate(in) + L-glutamate(out) + H(+)(out) = L-aspartate(out) + L-glutamate(in) + H(+)(in). It carries out the reaction 3-sulfino-L-alanine(out) + L-glutamate(in) + H(+)(in) = 3-sulfino-L-alanine(in) + L-glutamate(out) + H(+)(out). It catalyses the reaction 3-sulfino-L-alanine(out) + L-aspartate(in) = 3-sulfino-L-alanine(in) + L-aspartate(out). L-aspartate and 3-sulfino-L-alanine uptake are both inhibited by glisoxepide. Functionally, mitochondrial electrogenic aspartate/glutamate antiporter that favors efflux of aspartate and entry of glutamate and proton within the mitochondria as part of the malate-aspartate shuttle. Also mediates the uptake of L-cysteinesulfinate (3-sulfino-L-alanine) by mitochondria in exchange of L-glutamate and proton. Can also exchange L-cysteinesulfinate with aspartate in their anionic form without any proton translocation. Lacks transport activity towards gamma-aminobutyric acid (GABA). The sequence is that of Electrogenic aspartate/glutamate antiporter SLC25A13, mitochondrial from Rattus norvegicus (Rat).